The following is a 352-amino-acid chain: Respiratory nitrate reductase subunit beta (352 aa).

Residues 20-48 (VAMVMDLNKCIGCQTCTVACKSLWTEGGG) enclose the 4Fe-4S ferredoxin-type 1 domain. [4Fe-4S] cluster contacts are provided by Cys29, Cys32, Cys35, and Cys39. 2 disordered regions span residues 63-95 (KGYP…KEDY) and 111-131 (SDRP…DEDQ). Residues 78 to 95 (SSEHKERKPGQIPDKEDY) show a composition bias toward basic and acidic residues. 4Fe-4S ferredoxin-type domains are found at residues 139–170 (SYYF…KREE) and 172–201 (GIVL…YNAT). The [4Fe-4S] cluster site is built by Cys148, Cys151, and Cys156. Residues Cys160, Cys181, and Cys187 each contribute to the [3Fe-4S] cluster site. [4Fe-4S] cluster-binding residues include Cys191, Cys208, Cys211, Cys229, and Cys233.

Probable multiprotein complex; a catalytic heterodimer of an alpha and beta chain is proposed to associate with additional subunits involved in membrane attachment and electron transfer. Requires [4Fe-4S] cluster as cofactor. [3Fe-4S] cluster serves as cofactor.

Its subcellular location is the cell membrane. The enzyme catalyses nitrate + a quinol = a quinone + nitrite + H2O. Inhibited by cyanide, azide and antimycin A. Enzyme stability is not dependent on salt concentration. In terms of biological role, the respiratory membrane-bound nitrate reductase enzyme complex plays a role in generation of metabolic energy by using nitrate as a terminal electron acceptor during anaerobic conditions. The beta chain is an electron transfer unit containing four cysteine clusters involved in the formation of iron-sulfur centers. This Haloferax mediterranei (strain ATCC 33500 / DSM 1411 / JCM 8866 / NBRC 14739 / NCIMB 2177 / R-4) (Halobacterium mediterranei) protein is Respiratory nitrate reductase subunit beta (narH).